Reading from the N-terminus, the 127-residue chain is Aspartate 1-decarboxylase (127 aa).

S25 serves as the catalytic Schiff-base intermediate with substrate; via pyruvic acid. Position 25 is a pyruvic acid (Ser) (S25). T57 is a substrate binding site. Y58 functions as the Proton donor in the catalytic mechanism. 73–75 (GAA) is a substrate binding site.

It belongs to the PanD family. Heterooctamer of four alpha and four beta subunits. The cofactor is pyruvate. Post-translationally, is synthesized initially as an inactive proenzyme, which is activated by self-cleavage at a specific serine bond to produce a beta-subunit with a hydroxyl group at its C-terminus and an alpha-subunit with a pyruvoyl group at its N-terminus.

It is found in the cytoplasm. It carries out the reaction L-aspartate + H(+) = beta-alanine + CO2. It functions in the pathway cofactor biosynthesis; (R)-pantothenate biosynthesis; beta-alanine from L-aspartate: step 1/1. In terms of biological role, catalyzes the pyruvoyl-dependent decarboxylation of aspartate to produce beta-alanine. The sequence is that of Aspartate 1-decarboxylase from Listeria welshimeri serovar 6b (strain ATCC 35897 / DSM 20650 / CCUG 15529 / CIP 8149 / NCTC 11857 / SLCC 5334 / V8).